The following is a 128-amino-acid chain: Probable 4-amino-4-deoxy-L-arabinose-phosphoundecaprenol flippase subunit ArnF (128 aa).

Residues 1 to 2 (MG) lie on the Cytoplasmic side of the membrane. A helical transmembrane segment spans residues 3 to 23 (LMWGLFSVIIASAAQLSLGFA). Over 24 to 35 (ASHLPPMTHLWD) the chain is Periplasmic. A helical membrane pass occupies residues 36-56 (FIAALLAFGLDARILLLGLLG). The Cytoplasmic segment spans residues 57–76 (YLLSVFCWYKTLHKLALSKA). The chain crosses the membrane as a helical span at residues 77–97 (YALLSMSYVLVWIASMVLPGW). Over 98–100 (EGT) the chain is Periplasmic. The chain crosses the membrane as a helical span at residues 101–121 (FSLKALLGVACIMSGLMLIFL). At 122 to 128 (PTTKQRY) the chain is on the cytoplasmic side.

Belongs to the ArnF family. As to quaternary structure, heterodimer of ArnE and ArnF.

It localises to the cell inner membrane. Its pathway is bacterial outer membrane biogenesis; lipopolysaccharide biosynthesis. Functionally, translocates 4-amino-4-deoxy-L-arabinose-phosphoundecaprenol (alpha-L-Ara4N-phosphoundecaprenol) from the cytoplasmic to the periplasmic side of the inner membrane. The sequence is that of Probable 4-amino-4-deoxy-L-arabinose-phosphoundecaprenol flippase subunit ArnF from Escherichia coli O127:H6 (strain E2348/69 / EPEC).